The sequence spans 86 residues: Protein Vpu (86 aa).

Over 1–12 (MLELIGRIDYRL) the chain is Extracellular. Residues 13–33 (GVGALIVALIIVIIVWTIAYI) form a helical membrane-spanning segment. The Cytoplasmic portion of the chain corresponds to 34–86 (EYRKLVRQRRIDWLVKRIKERAEDSGNESGGDTEELETMVDMGHLRLLDGNDL). S58 and S62 each carry phosphoserine; by host CK2.

Belongs to the HIV-1 VPU protein family. Homopentamer. Interacts with host CD4 and BRTC; these interactions induce proteasomal degradation of CD4. Interacts with host BST2; this interaction leads to the degradation of host BST2. Interacts with host FBXW11. Interacts with host AP1M1; this interaction plays a role in the mistrafficking and subsequent degradation of host BST2. Interacts with host RANBP2; this interaction allows Vpu to down-regulate host BLM sumoylation. Post-translationally, phosphorylated by host CK2. This phosphorylation is necessary for interaction with human BTRC and degradation of CD4.

It localises to the host membrane. With respect to regulation, ion channel activity is inhibited by hexamethylene amiloride in vitro. Functionally, enhances virion budding, by targeting human CD4 and Tetherin/BST2 to proteasome degradation. Degradation of CD4 prevents any unwanted premature interactions between viral Env and its host receptor CD4 in the endoplasmic reticulum. Degradation of antiretroviral protein Tetherin/BST2 is important for virion budding, as BST2 tethers new viral particles to the host cell membrane. Mechanistically, Vpu bridges either CD4 or BST2 to BTRC, a substrate recognition subunit of the Skp1/Cullin/F-box protein E3 ubiquitin ligase, induces their ubiquitination and subsequent proteasomal degradation. The alteration of the E3 ligase specificity by Vpu seems to promote the degradation of host IKBKB, leading to NF-kappa-B down-regulation and subsequent apoptosis. Acts as a viroporin that forms an oligomeric ion channel in membranes. Modulates the host DNA repair mechanisms to promote degradation of nuclear viral cDNA in cells that are already productively infected in order to suppress immune sensing and proviral hyper-integration (superinfection). Manipulates PML-NBs and modulates SUMOylation of host BLM protein thereby enhancing its DNA-end processing activity toward viral unintegrated linear DNA. Also inhibits RAD52-mediated homologous repair of viral cDNA, preventing the generation of dead-end circular forms of single copies of the long terminal repeat and permitting sustained nucleolytic attack. This is Protein Vpu from Homo sapiens (Human).